We begin with the raw amino-acid sequence, 108 residues long: ATP-dependent Clp protease adapter protein ClpS (108 aa).

This sequence belongs to the ClpS family. Binds to the N-terminal domain of the chaperone ClpA.

Involved in the modulation of the specificity of the ClpAP-mediated ATP-dependent protein degradation. This Mycobacterium leprae (strain TN) protein is ATP-dependent Clp protease adapter protein ClpS.